We begin with the raw amino-acid sequence, 446 residues long: Enolase (446 aa).

Positions 164 and 173 each coordinate substrate. Glutamate 216 functions as the Proton donor in the catalytic mechanism. Positions 251, 302, and 329 each coordinate Mg(2+). Residues glutamate 302 and aspartate 329 each coordinate substrate. Catalysis depends on lysine 354, which acts as the Proton acceptor. Residues 381–384 (SHRS) and lysine 405 each bind substrate.

Belongs to the enolase family. As to quaternary structure, homodimer. Requires Mg(2+) as cofactor.

Its subcellular location is the cytoplasm. It carries out the reaction (2R)-2-phosphoglycerate = phosphoenolpyruvate + H2O. It participates in carbohydrate degradation; glycolysis; pyruvate from D-glyceraldehyde 3-phosphate: step 4/5. In Oryza sativa subsp. japonica (Rice), this protein is Enolase (ENO1).